We begin with the raw amino-acid sequence, 516 residues long: GTPase Obg (516 aa).

The Obg domain maps to 4–161; sequence PTFVDRVTLH…LEIVLELKVV (158 aa). The OBG-type G domain occupies 162–332; the sequence is ADIGLVGFPS…LTFAMAGIVE (171 aa). Residues 168-175, 193-197, 214-217, 284-287, and 313-315 each bind GTP; these read GFPSAGKS, FTTLV, DVPG, NKVD, and SAA. Mg(2+) is bound by residues Ser-175 and Thr-195. Residues 351-432 enclose the OCT domain; sequence PSVDGSDAFT…ENAVVFDFKP (82 aa). The segment covering 466–491 has biased composition (basic and acidic residues); that stretch reads AMADRAEGETRADVARRLDRPAREDG. A disordered region spans residues 466-516; the sequence is AMADRAEGETRADVARRLDRPAREDGGAYGPQSYEIGGRDDPDWAEEDLGE.

The protein belongs to the TRAFAC class OBG-HflX-like GTPase superfamily. OBG GTPase family. As to quaternary structure, monomer. It depends on Mg(2+) as a cofactor.

Its subcellular location is the cytoplasm. In terms of biological role, an essential GTPase which binds GTP, GDP and possibly (p)ppGpp with moderate affinity, with high nucleotide exchange rates and a fairly low GTP hydrolysis rate. Plays a role in control of the cell cycle, stress response, ribosome biogenesis and in those bacteria that undergo differentiation, in morphogenesis control. This is GTPase Obg from Nocardioides sp. (strain ATCC BAA-499 / JS614).